The primary structure comprises 200 residues: ATP-dependent Clp protease proteolytic subunit 1 (200 aa).

S102 serves as the catalytic Nucleophile. H127 is an active-site residue.

It belongs to the peptidase S14 family. In terms of assembly, fourteen ClpP subunits assemble into 2 heptameric rings which stack back to back to give a disk-like structure with a central cavity, resembling the structure of eukaryotic proteasomes.

It is found in the cytoplasm. The enzyme catalyses Hydrolysis of proteins to small peptides in the presence of ATP and magnesium. alpha-casein is the usual test substrate. In the absence of ATP, only oligopeptides shorter than five residues are hydrolyzed (such as succinyl-Leu-Tyr-|-NHMec, and Leu-Tyr-Leu-|-Tyr-Trp, in which cleavage of the -Tyr-|-Leu- and -Tyr-|-Trp bonds also occurs).. Functionally, cleaves peptides in various proteins in a process that requires ATP hydrolysis. Has a chymotrypsin-like activity. Plays a major role in the degradation of misfolded proteins. The sequence is that of ATP-dependent Clp protease proteolytic subunit 1 from Bradyrhizobium diazoefficiens (strain JCM 10833 / BCRC 13528 / IAM 13628 / NBRC 14792 / USDA 110).